The sequence spans 72 residues: SRY-related protein MG44 (72 aa).

The HMG box DNA-binding region spans 1–69 (VKRPMNAFMV…KHMADYPNYK (69 aa)).

The protein localises to the nucleus. The sequence is that of SRY-related protein MG44 from Tarentola mauritanica (Common wall gecko).